Reading from the N-terminus, the 124-residue chain is Urease subunit beta (124 aa).

The protein belongs to the urease beta subunit family. In terms of assembly, heterotrimer of UreA (gamma), UreB (beta) and UreC (alpha) subunits. Three heterotrimers associate to form the active enzyme.

It localises to the cytoplasm. The enzyme catalyses urea + 2 H2O + H(+) = hydrogencarbonate + 2 NH4(+). It functions in the pathway nitrogen metabolism; urea degradation; CO(2) and NH(3) from urea (urease route): step 1/1. In Ureaplasma urealyticum serovar 10 (strain ATCC 33699 / Western), this protein is Urease subunit beta.